We begin with the raw amino-acid sequence, 570 residues long: Periplasmic trehalase (570 aa).

The signal sequence occupies residues 1–34; sequence MIPPEIRRSVLLQKAIKLALAGTLLTFASFSATA. Substrate is bound by residues R159, 166–167, N203, 212–214, 284–286, and G317; these read WD, RSQ, and RPE. Active-site proton donor/acceptor residues include D319 and E503. E518 lines the substrate pocket. Positions 544 to 570 are disordered; that stretch reads KPCDSVPSTRPASLSATPTKTPSAATQ. Residues 554 to 570 are compositionally biased toward low complexity; that stretch reads PASLSATPTKTPSAATQ.

This sequence belongs to the glycosyl hydrolase 37 family. In terms of assembly, monomer.

It is found in the periplasm. The enzyme catalyses alpha,alpha-trehalose + H2O = alpha-D-glucose + beta-D-glucose. Its function is as follows. Provides the cells with the ability to utilize trehalose at high osmolarity by splitting it into glucose molecules that can subsequently be taken up by the phosphotransferase-mediated uptake system. In Salmonella typhimurium (strain LT2 / SGSC1412 / ATCC 700720), this protein is Periplasmic trehalase.